The sequence spans 675 residues: Methionine--tRNA ligase (675 aa).

A 'HIGH' region motif is present at residues 15 to 25 (PYANGSIHLGH). Zn(2+) is bound by residues Cys146, Cys149, Cys159, and Cys162. The 'KMSKS' region motif lies at 332–336 (KMSKS). Lys335 contacts ATP. In terms of domain architecture, tRNA-binding spans 573-675 (DFAKVDMRIA…SGAQPGMQVK (103 aa)).

This sequence belongs to the class-I aminoacyl-tRNA synthetase family. MetG type 1 subfamily. As to quaternary structure, homodimer. Zn(2+) is required as a cofactor.

The protein resides in the cytoplasm. It carries out the reaction tRNA(Met) + L-methionine + ATP = L-methionyl-tRNA(Met) + AMP + diphosphate. Its function is as follows. Is required not only for elongation of protein synthesis but also for the initiation of all mRNA translation through initiator tRNA(fMet) aminoacylation. The protein is Methionine--tRNA ligase of Yersinia pseudotuberculosis serotype I (strain IP32953).